The chain runs to 254 residues: Citrate synthase-lysine N-methyltransferase CSKMT, mitochondrial (254 aa).

Residues 1–45 (MLLNRFLVPLRSLQKLTQARRWHQTSLINDLVVNMDKKAMWDRFY) constitute a mitochondrion transit peptide.

Belongs to the methyltransferase superfamily.

It localises to the mitochondrion. It carries out the reaction L-lysyl-[citrate synthase] + S-adenosyl-L-methionine = N(6)-methyl-L-lysyl-[citrate synthase] + S-adenosyl-L-homocysteine + H(+). The enzyme catalyses N(6)-methyl-L-lysyl-[citrate synthase] + S-adenosyl-L-methionine = N(6),N(6)-dimethyl-L-lysyl-[citrate synthase] + S-adenosyl-L-homocysteine + H(+). It catalyses the reaction N(6),N(6)-dimethyl-L-lysyl-[citrate synthase] + S-adenosyl-L-methionine = N(6),N(6),N(6)-trimethyl-L-lysyl-[citrate synthase] + S-adenosyl-L-homocysteine + H(+). Citrate synthase-lysine methyltransferase activity is inhibited by S-adenosylhomocysteine (AdoHcy) and oxaloacetate (OAA). Functionally, protein-lysine methyltransferase that selectively trimethylates citrate synthase (CS) in mitochondria. Seems to conduct trimethylation in a highly distributive manner rather than in a processive manner, and thus introduces a single methyl group per binding event. The sequence is that of Citrate synthase-lysine N-methyltransferase CSKMT, mitochondrial from Danio rerio (Zebrafish).